Here is a 581-residue protein sequence, read N- to C-terminus: DEAD-box ATP-dependent RNA helicase 22 (581 aa).

A Q motif motif is present at residues 80-108; the sequence is VSWKSLGLSDNVSIALRDSGFDRPSLTQA. The Helicase ATP-binding domain maps to 111–380; sequence IPSILSGKDV…GGILKHMFQD (270 aa). 124–131 serves as a coordination point for ATP; it reads AETGSGKT. The short motif at 244–247 is the DEAD box element; sequence DEAD. A Helicase C-terminal domain is found at 408–566; that stretch reads QVDALIEAVK…GFRNKVKKRA (159 aa).

This sequence belongs to the DEAD box helicase family.

It carries out the reaction ATP + H2O = ADP + phosphate + H(+). This is DEAD-box ATP-dependent RNA helicase 22 (RH22) from Arabidopsis thaliana (Mouse-ear cress).